A 701-amino-acid polypeptide reads, in one-letter code: Elongation factor G (701 aa).

The tr-type G domain maps to 8-291 (GRYRNIGIVA…AVIDYLPAPT (284 aa)). Residues 17–24 (AHVDAGKT), 89–93 (DTPGH), and 143–146 (NKMD) contribute to the GTP site.

Belongs to the TRAFAC class translation factor GTPase superfamily. Classic translation factor GTPase family. EF-G/EF-2 subfamily.

Its subcellular location is the cytoplasm. Its function is as follows. Catalyzes the GTP-dependent ribosomal translocation step during translation elongation. During this step, the ribosome changes from the pre-translocational (PRE) to the post-translocational (POST) state as the newly formed A-site-bound peptidyl-tRNA and P-site-bound deacylated tRNA move to the P and E sites, respectively. Catalyzes the coordinated movement of the two tRNA molecules, the mRNA and conformational changes in the ribosome. This is Elongation factor G from Pseudomonas savastanoi pv. phaseolicola (strain 1448A / Race 6) (Pseudomonas syringae pv. phaseolicola (strain 1448A / Race 6)).